A 299-amino-acid polypeptide reads, in one-letter code: Class II hydrophobin C (299 aa).

The signal sequence occupies residues 1–17 (MKFLTVAAAIFASTSLA). 3 N-linked (GlcNAc...) asparagine glycosylation sites follow: N39, N78, and N91. Intrachain disulfides connect C232–C281, C242–C272, C243–C255, and C282–C293.

It belongs to the cerato-ulmin hydrophobin family.

The protein resides in the secreted. Its subcellular location is the cell wall. The protein localises to the vacuole. It is found in the cytoplasmic vesicle. Its function is as follows. Aerial growth, conidiation, and dispersal of filamentous fungi in the environment rely upon a capability of their secreting small amphipathic proteins called hydrophobins (HPBs) with low sequence identity. Class I can self-assemble into an outermost layer of rodlet bundles on aerial cell surfaces, conferring cellular hydrophobicity that supports fungal growth, development and dispersal; whereas Class II form highly ordered films at water-air interfaces through intermolecular interactions but contribute nothing to the rodlet structure. Hyd2C contributes to certain cell wall-related features, such as hydrophobicity but is not involved in cell wall-related events during fungal proliferation in host hemocoel. Does not contribute to conidial hydrophobicity. Involved actively in the asexual development. The sequence is that of Class II hydrophobin C from Beauveria bassiana (strain ARSEF 2860) (White muscardine disease fungus).